The primary structure comprises 717 residues: Polyribonucleotide nucleotidyltransferase (717 aa).

Positions 488 and 494 each coordinate Mg(2+). Residues 555–614 (PRIEVMNIPVDKIREVIGSGGKVIREIVEKTGAKINIEDDGTVKIASSSGKEIEAARKWI) enclose the KH domain. The 69-residue stretch at 624-692 (GQIYEGTVVK…ERGKVRLSMK (69 aa)) folds into the S1 motif domain.

It belongs to the polyribonucleotide nucleotidyltransferase family. Mg(2+) serves as cofactor.

The protein resides in the cytoplasm. The catalysed reaction is RNA(n+1) + phosphate = RNA(n) + a ribonucleoside 5'-diphosphate. Its function is as follows. Involved in mRNA degradation. Catalyzes the phosphorolysis of single-stranded polyribonucleotides processively in the 3'- to 5'-direction. The polypeptide is Polyribonucleotide nucleotidyltransferase (Sinorhizobium fredii (strain NBRC 101917 / NGR234)).